A 439-amino-acid chain; its full sequence is Probable eukaryotic translation initiation factor 5-1 (439 aa).

GTP is bound at residue 29–36 (GRGNGIKT). The disordered stretch occupies residues 143–245 (LKNPPEQKKS…REAAEKRMKE (103 aa)). Positions 147–186 (PEQKKSSKDKKSMRRAEKERLREGEAADEEMRKLKKEAAS) are enriched in basic and acidic residues. Acidic residues predominate over residues 214 to 228 (DENDQADSEEDDDDV). Thr-232 bears the Phosphothreonine mark. The segment covering 234-245 (TSREAAEKRMKE) has biased composition (basic and acidic residues). One can recognise a W2 domain in the interval 283-439 (KIPENAHEKL…QNAESESEEE (157 aa)). Ser-434 and Ser-436 each carry phosphoserine.

The protein belongs to the eIF-2-beta/eIF-5 family.

Functionally, catalyzes the hydrolysis of GTP bound to the 40S ribosomal initiation complex (40S.mRNA.Met-tRNA[F].eIF-2.GTP) with the subsequent joining of a 60S ribosomal subunit resulting in the release of eIF-2 and the guanine nucleotide. The subsequent joining of a 60S ribosomal subunit results in the formation of a functional 80S initiation complex (80S.mRNA.Met-tRNA[F]). In Arabidopsis thaliana (Mouse-ear cress), this protein is Probable eukaryotic translation initiation factor 5-1.